The primary structure comprises 161 residues: Small ribosomal subunit protein uS9 (161 aa).

The protein belongs to the universal ribosomal protein uS9 family.

This Bartonella tribocorum (strain CIP 105476 / IBS 506) protein is Small ribosomal subunit protein uS9.